A 1004-amino-acid chain; its full sequence is Phyllocladan-16-alpha-ol synthase (1004 aa).

A DXDD motif motif is present at residues 321 to 324 (DADD). Residues D667, E671, N872, D873, S876, and D880 each contribute to the Mg(2+) site. A DEXXE motif motif is present at residues 667-671 (DEFME).

It belongs to the terpene synthase family. Mg(2+) serves as cofactor.

The enzyme catalyses (2E,6E,10E)-geranylgeranyl diphosphate = (+)-copalyl diphosphate. It catalyses the reaction (+)-copalyl diphosphate + H2O = phyllocladan-16alpha-ol + diphosphate. Involved in the synthesis of labdane-related hydrocarbons by catalyzing the conversion of geranylgeranyl diphosphate (GGDP) to phyllocladan-16-alpha-ol in a two step via type B cyclization into a (+)-copalyl diphosphate ((+)-CDP) intermediate. In Phomopsis amygdali (Fusicoccum amygdali), this protein is Phyllocladan-16-alpha-ol synthase (PaDC1).